The chain runs to 212 residues: uncharacterized protein (212 aa).

A signal peptide spans M1–A20.

The protein localises to the virion. This is an uncharacterized protein from Acanthamoeba polyphaga (Amoeba).